We begin with the raw amino-acid sequence, 242 residues long: Pyridoxine 5'-phosphate synthase (242 aa).

N7 is a 3-amino-2-oxopropyl phosphate binding site. 9-10 (DH) is a 1-deoxy-D-xylulose 5-phosphate binding site. A 3-amino-2-oxopropyl phosphate-binding site is contributed by R18. Catalysis depends on H44, which acts as the Proton acceptor. 1-deoxy-D-xylulose 5-phosphate is bound by residues R46 and H51. E71 serves as the catalytic Proton acceptor. T101 is a binding site for 1-deoxy-D-xylulose 5-phosphate. The active-site Proton donor is H192. 3-amino-2-oxopropyl phosphate contacts are provided by residues G193 and 214 to 215 (GH).

The protein belongs to the PNP synthase family. As to quaternary structure, homooctamer; tetramer of dimers.

Its subcellular location is the cytoplasm. It catalyses the reaction 3-amino-2-oxopropyl phosphate + 1-deoxy-D-xylulose 5-phosphate = pyridoxine 5'-phosphate + phosphate + 2 H2O + H(+). Its pathway is cofactor biosynthesis; pyridoxine 5'-phosphate biosynthesis; pyridoxine 5'-phosphate from D-erythrose 4-phosphate: step 5/5. Functionally, catalyzes the complicated ring closure reaction between the two acyclic compounds 1-deoxy-D-xylulose-5-phosphate (DXP) and 3-amino-2-oxopropyl phosphate (1-amino-acetone-3-phosphate or AAP) to form pyridoxine 5'-phosphate (PNP) and inorganic phosphate. This Synechocystis sp. (strain ATCC 27184 / PCC 6803 / Kazusa) protein is Pyridoxine 5'-phosphate synthase.